Here is a 636-residue protein sequence, read N- to C-terminus: Alpha-L-iduronidase (636 aa).

Positions 1–16 (MLSLLLVLTTLARIHA) are cleaved as a signal peptide. Residues Pro-39, Ile-43, and His-45 each coordinate alpha-D-mannopyranose. Residues His-78, Asn-169, and Glu-170 each coordinate alpha-L-iduronate. Glu-170 (proton donor) is an active-site residue. Asn-180 carries an N-linked (GlcNAc...) asparagine glycan. Residue Lys-257 coordinates alpha-L-iduronate. An N-linked (GlcNAc...) asparagine glycan is attached at Asn-268. Residues Glu-293 and Gly-299 each coordinate alpha-L-iduronate. Glu-293 (nucleophile) is an active-site residue. Residue Trp-300 participates in alpha-D-mannopyranose binding. The alpha-L-iduronate site is built by Asp-342 and Arg-356. Residues Asn-365, Asn-448, Asn-453, and Asn-483 are each glycosylated (N-linked (GlcNAc...) asparagine). Cysteines 529 and 565 form a disulfide. An N-linked (GlcNAc...) asparagine glycan is attached at Asn-622.

It belongs to the glycosyl hydrolase 39 family.

Its subcellular location is the lysosome. The catalysed reaction is Hydrolysis of unsulfated alpha-L-iduronosidic linkages in dermatan sulfate.. Its function is as follows. Essential lysosomal hydrolase responsible for the degradation of glycosaminoglycans (GAG) such as heparan sulfate. Required for lysosome function and autophagy. Consequently, has an essential role in the development, maintenance and function of various cells, tissues, and organs, including the muscles and the central nervous system (CNS). This chain is Alpha-L-iduronidase, found in Drosophila melanogaster (Fruit fly).